Reading from the N-terminus, the 66-residue chain is Sarcoplasmic/endoplasmic reticulum calcium ATPase regulator ARLN (66 aa).

An N-acetylmethionine modification is found at M1. Positions M1–G38 are disordered. The span at D9–L20 shows a compositional bias: basic and acidic residues. The chain crosses the membrane as a helical span at residues W45–L65.

As to quaternary structure, homooligomer. Can also form heterooligomers with other sarcoplasmic/endoplasmic reticulum calcium ATPase (SERCA) regulators ERLN, PLN, SLN and STRIT1/DWORF. Monomer. Interacts as a monomer with ATP2A2/SERCA2; the interaction results in inhibition of ATP2A2 Ca(2+) affinity.

The protein localises to the endoplasmic reticulum membrane. Functionally, inhibits the activity of the calcium ATPases ATP2A2/SERCA2 and ATP2A3/SERCA3 by decreasing their apparent affinity for Ca(2+). In Pongo abelii (Sumatran orangutan), this protein is Sarcoplasmic/endoplasmic reticulum calcium ATPase regulator ARLN (ARLN).